Consider the following 383-residue polypeptide: Neuropeptide Y receptor type 1 (383 aa).

Topologically, residues Met-1 to Ala-44 are extracellular. Asn-2, Asn-11, and Asn-17 each carry an N-linked (GlcNAc...) asparagine glycan. Residues Leu-45–Ile-65 traverse the membrane as a helical segment. Residues Leu-66 to Asn-76 lie on the Cytoplasmic side of the membrane. The chain crosses the membrane as a helical span at residues Ile-77 to Thr-97. Residues Phe-98–Asn-116 are Extracellular-facing. A disulfide bond links Cys-113 and Cys-198. A helical membrane pass occupies residues Pro-117 to Glu-137. Residues Arg-138 to His-154 are Cytoplasmic-facing. A helical transmembrane segment spans residues Ala-155–Ile-175. At Tyr-176–Tyr-211 the chain is on the extracellular side. N-linked (GlcNAc...) asparagine glycosylation is present at Asn-186. A helical membrane pass occupies residues Thr-212–Phe-232. The Cytoplasmic portion of the chain corresponds to Lys-233–Arg-260. Residues Ile-261–Ile-281 form a helical membrane-spanning segment. Residues Phe-282–Asn-299 are Extracellular-facing. Residues Leu-300–Tyr-320 form a helical membrane-spanning segment. Over Gly-321–Ile-383 the chain is Cytoplasmic. The S-palmitoyl cysteine moiety is linked to residue Cys-338. Ser-368 is modified (phosphoserine).

It belongs to the G-protein coupled receptor 1 family.

Its subcellular location is the cell membrane. Its function is as follows. Receptor for neuropeptide Y and peptide YY. This chain is Neuropeptide Y receptor type 1 (NPY1R), found in Bos taurus (Bovine).